We begin with the raw amino-acid sequence, 259 residues long: Deoxyribose-phosphate aldolase (259 aa).

Asp-102 functions as the Proton donor/acceptor in the catalytic mechanism. Lys-167 functions as the Schiff-base intermediate with acetaldehyde in the catalytic mechanism. Lys-201 serves as the catalytic Proton donor/acceptor.

This sequence belongs to the DeoC/FbaB aldolase family. DeoC type 2 subfamily.

Its subcellular location is the cytoplasm. It carries out the reaction 2-deoxy-D-ribose 5-phosphate = D-glyceraldehyde 3-phosphate + acetaldehyde. The protein operates within carbohydrate degradation; 2-deoxy-D-ribose 1-phosphate degradation; D-glyceraldehyde 3-phosphate and acetaldehyde from 2-deoxy-alpha-D-ribose 1-phosphate: step 2/2. In terms of biological role, catalyzes a reversible aldol reaction between acetaldehyde and D-glyceraldehyde 3-phosphate to generate 2-deoxy-D-ribose 5-phosphate. This is Deoxyribose-phosphate aldolase from Shigella flexneri.